The primary structure comprises 365 residues: MQNNEILKPAKYFSELEKSVLLALVEKYKYVLECKKSDARTIALKQRTWQALAHEYNSQPSVSLRDFKQLKKCWENIKARTKKIMAHERREKGKLFGPESNSHQALKEKVASMIPEQLYFVQNQPDDERGYNHDTSNQEMDCKRVSLLDLEVLIDEQGKIQTKPFRKVPETNSLCDDGSPPQSIDKAFPNGDLELLIDEQGKIQAEPIRKVPVTDSQCAQGSPSSSIKTESFVVPERDVYEDQNSIVNMHSSESSLHSTPLFPSSKISANRTYGRKPSQNGIFTKMHEEQHHQQMSILQLQLIQMNEVHVAKVQQIERECEMAEEEHRIKMEILNKKKMYWERKLQTITKEWPVASFNRPFPNSP.

The region spanning 13–78 (FSELEKSVLL…QLKKCWENIK (66 aa)) is the Myb-like domain. Positions 301 to 337 (QLIQMNEVHVAKVQQIERECEMAEEEHRIKMEILNKK) form a coiled coil.

The protein belongs to the MSANTD3 family.

The protein is Myb/SANT-like DNA-binding domain-containing protein 3 (msantd3) of Xenopus tropicalis (Western clawed frog).